Consider the following 447-residue polypeptide: MSRRYFGTDGVRGRANATLTADLALRVGMAAGLIFQRGEYRHRVVIGKDTRLSGYMIENALVAGFTSVGMDVLLLGPVPTPAVGMLTRSMRADLGVMISASHNPFDDNGIKLFGPDGFKLSDEVEREIEELIDEDIAKRLAKPAEIGRAKRLEGVHARYIEYAKRTLPRDQTFDGIRVVVDCANGAGYKVAPEALWELGADVVSIGVEPDGMNINRDVGSTSPAALSAKVREVRADIGIALDGDADRVIIVDEKGHVVDGDQLMAVVAESFKEDGRLARSGLVATVMSNLGLERHLAGEGISLARTAVGDRYVLERMRADGYNVGGEQSGHIILSDYSTTGDGLVAALQVLAVVARRGKPVSEVCHRFDPLPQILKNVRYASGRPLEDEKVKIVIADAERRLANHGRLLIRPSGTEPVIRVMGEGDDRDLVENVVDDVIDVLQKVAA.

The Phosphoserine intermediate role is filled by Ser-101. Mg(2+)-binding residues include Ser-101, Asp-242, Asp-244, and Asp-246. Ser-101 carries the post-translational modification Phosphoserine.

It belongs to the phosphohexose mutase family. Requires Mg(2+) as cofactor. In terms of processing, activated by phosphorylation.

The enzyme catalyses alpha-D-glucosamine 1-phosphate = D-glucosamine 6-phosphate. Its function is as follows. Catalyzes the conversion of glucosamine-6-phosphate to glucosamine-1-phosphate. This Xanthobacter autotrophicus (strain ATCC BAA-1158 / Py2) protein is Phosphoglucosamine mutase.